The following is a 166-amino-acid chain: Regulatory protein RecX (166 aa).

The protein belongs to the RecX family.

It localises to the cytoplasm. Its function is as follows. Modulates RecA activity. This is Regulatory protein RecX from Salmonella paratyphi C (strain RKS4594).